Here is a 385-residue protein sequence, read N- to C-terminus: S-adenosylmethionine synthase (385 aa).

H15 is an ATP binding site. D17 serves as a coordination point for Mg(2+). E43 serves as a coordination point for K(+). Residues E56 and Q99 each coordinate L-methionine. The interval Q99 to E109 is flexible loop. Residues D164 to K166, R230 to F231, D239, R245 to K246, A262, and K266 each bind ATP. D239 is a binding site for L-methionine. K270 lines the L-methionine pocket.

This sequence belongs to the AdoMet synthase family. In terms of assembly, homotetramer; dimer of dimers. It depends on Mg(2+) as a cofactor. Requires K(+) as cofactor.

The protein localises to the cytoplasm. It catalyses the reaction L-methionine + ATP + H2O = S-adenosyl-L-methionine + phosphate + diphosphate. It functions in the pathway amino-acid biosynthesis; S-adenosyl-L-methionine biosynthesis; S-adenosyl-L-methionine from L-methionine: step 1/1. In terms of biological role, catalyzes the formation of S-adenosylmethionine (AdoMet) from methionine and ATP. The overall synthetic reaction is composed of two sequential steps, AdoMet formation and the subsequent tripolyphosphate hydrolysis which occurs prior to release of AdoMet from the enzyme. This Hydrogenovibrio crunogenus (strain DSM 25203 / XCL-2) (Thiomicrospira crunogena) protein is S-adenosylmethionine synthase.